The primary structure comprises 465 residues: UDP-N-acetylmuramate--L-alanine ligase (465 aa).

125–131 is an ATP binding site; the sequence is GTHGKTT.

Belongs to the MurCDEF family.

It localises to the cytoplasm. The enzyme catalyses UDP-N-acetyl-alpha-D-muramate + L-alanine + ATP = UDP-N-acetyl-alpha-D-muramoyl-L-alanine + ADP + phosphate + H(+). Its pathway is cell wall biogenesis; peptidoglycan biosynthesis. Functionally, cell wall formation. The sequence is that of UDP-N-acetylmuramate--L-alanine ligase from Deinococcus geothermalis (strain DSM 11300 / CIP 105573 / AG-3a).